The primary structure comprises 367 residues: Chorismate synthase (367 aa).

Position 48 (arginine 48) interacts with NADP(+). FMN-binding positions include 125-127 (RSS), 241-242 (NA), glycine 285, 300-304 (KPTSS), and arginine 326.

This sequence belongs to the chorismate synthase family. As to quaternary structure, homotetramer. Requires FMNH2 as cofactor.

It catalyses the reaction 5-O-(1-carboxyvinyl)-3-phosphoshikimate = chorismate + phosphate. It functions in the pathway metabolic intermediate biosynthesis; chorismate biosynthesis; chorismate from D-erythrose 4-phosphate and phosphoenolpyruvate: step 7/7. Functionally, catalyzes the anti-1,4-elimination of the C-3 phosphate and the C-6 proR hydrogen from 5-enolpyruvylshikimate-3-phosphate (EPSP) to yield chorismate, which is the branch point compound that serves as the starting substrate for the three terminal pathways of aromatic amino acid biosynthesis. This reaction introduces a second double bond into the aromatic ring system. This Dinoroseobacter shibae (strain DSM 16493 / NCIMB 14021 / DFL 12) protein is Chorismate synthase.